A 225-amino-acid chain; its full sequence is Cytidylate kinase (225 aa).

12–20 is a binding site for ATP; it reads GPSGAGKGT.

It belongs to the cytidylate kinase family. Type 1 subfamily.

The protein resides in the cytoplasm. The enzyme catalyses CMP + ATP = CDP + ADP. It carries out the reaction dCMP + ATP = dCDP + ADP. This chain is Cytidylate kinase, found in Pectobacterium carotovorum subsp. carotovorum (strain PC1).